The sequence spans 54 residues: Lectin alpha chain (54 aa).

Belongs to the leguminous lectin family. In terms of assembly, tetramer of two alpha and two beta chains.

This chain is Lectin alpha chain, found in Lathyrus odoratus (Sweet pea).